Reading from the N-terminus, the 400-residue chain is MSQTNGTHTKKAVHFGAGNIGRGFVACFLHNSGYEVVFADVTDRTCDALNNQTSYKVIEVGAEGTEEKTITNYRAINSKTKEDELLQEIATADVVTCSVGPNILKFIAPVIAKGLDMRSEELKPAAVIACENAIGATDTLAEHIKEHLPATRVEDLSTRARFANSAIDRIVPAQDPNSGLDVKLEKFYEWVVDRTPFADHEVPSIEGIHWVDNLEPYIERKLYTVNTGHATAAYHGYNRQKRTVYDALQDREIQSEVRRALENTSKLITAKHGINPEEQQAYVRKIMTRIGNPHLEDAVERVGRAPLRKLSRKERFVGPAAELAEKGEDCSALLDAAEMALRFQNVEEDAESKELAKIMAENSAEQVVSQVCGLQPSEKLYPKMVEIVHRVQQDSMDDTE.

Residue 12–23 coordinates NAD(+); it reads AVHFGAGNIGRG. K221 is a catalytic residue.

Belongs to the mannitol dehydrogenase family. As to quaternary structure, monomer.

The catalysed reaction is D-mannitol 1-phosphate + NAD(+) = beta-D-fructose 6-phosphate + NADH + H(+). Functionally, catalyzes the NAD(H)-dependent interconversion of D-fructose 6-phosphate and D-mannitol 1-phosphate in the mannitol metabolic pathway. The chain is Mannitol-1-phosphate 5-dehydrogenase from Pyricularia oryzae (strain Y34) (Rice blast fungus).